We begin with the raw amino-acid sequence, 361 residues long: Phospho-N-acetylmuramoyl-pentapeptide-transferase (361 aa).

The next 10 membrane-spanning stretches (helical) occupy residues Tyr21–Gly41, Thr73–Leu93, Phe97–Trp117, Tyr134–Val154, Leu168–Thr188, Gly200–Ala220, Ala237–Phe257, Val264–Ile284, Ile289–Val309, and Gln338–Leu358.

The protein belongs to the glycosyltransferase 4 family. MraY subfamily. Mg(2+) is required as a cofactor.

It localises to the cell inner membrane. The catalysed reaction is UDP-N-acetyl-alpha-D-muramoyl-L-alanyl-gamma-D-glutamyl-meso-2,6-diaminopimeloyl-D-alanyl-D-alanine + di-trans,octa-cis-undecaprenyl phosphate = di-trans,octa-cis-undecaprenyl diphospho-N-acetyl-alpha-D-muramoyl-L-alanyl-D-glutamyl-meso-2,6-diaminopimeloyl-D-alanyl-D-alanine + UMP. It participates in cell wall biogenesis; peptidoglycan biosynthesis. Catalyzes the initial step of the lipid cycle reactions in the biosynthesis of the cell wall peptidoglycan: transfers peptidoglycan precursor phospho-MurNAc-pentapeptide from UDP-MurNAc-pentapeptide onto the lipid carrier undecaprenyl phosphate, yielding undecaprenyl-pyrophosphoryl-MurNAc-pentapeptide, known as lipid I. This is Phospho-N-acetylmuramoyl-pentapeptide-transferase from Methylobacillus flagellatus (strain ATCC 51484 / DSM 6875 / VKM B-1610 / KT).